Here is a 258-residue protein sequence, read N- to C-terminus: Imidazole glycerol phosphate synthase subunit HisF (258 aa).

Active-site residues include D11 and D130.

This sequence belongs to the HisA/HisF family. Heterodimer of HisH and HisF.

The protein resides in the cytoplasm. It catalyses the reaction 5-[(5-phospho-1-deoxy-D-ribulos-1-ylimino)methylamino]-1-(5-phospho-beta-D-ribosyl)imidazole-4-carboxamide + L-glutamine = D-erythro-1-(imidazol-4-yl)glycerol 3-phosphate + 5-amino-1-(5-phospho-beta-D-ribosyl)imidazole-4-carboxamide + L-glutamate + H(+). It functions in the pathway amino-acid biosynthesis; L-histidine biosynthesis; L-histidine from 5-phospho-alpha-D-ribose 1-diphosphate: step 5/9. IGPS catalyzes the conversion of PRFAR and glutamine to IGP, AICAR and glutamate. The HisF subunit catalyzes the cyclization activity that produces IGP and AICAR from PRFAR using the ammonia provided by the HisH subunit. This chain is Imidazole glycerol phosphate synthase subunit HisF, found in Xanthomonas campestris pv. campestris (strain B100).